A 300-amino-acid polypeptide reads, in one-letter code: Telomere repeat-binding factor 1 (300 aa).

Residues 1–58 enclose the HTH myb-type domain; the sequence is MGAPKQKWTQEEESALKSGVIKHGPGKWRTILKDPEFSGVLYLRSNVDLKDKWRNMSV. The H-T-H motif DNA-binding region spans 28 to 57; that stretch reads WRTILKDPEFSGVLYLRSNVDLKDKWRNMS. 2 disordered regions span residues 93–119 and 185–213; these read LQSD…RPNV and NSTP…PSPK. Residues 117–185 enclose the H15 domain; sequence PNVRLDSLIM…KVKRKYRIPN (69 aa). Positions 241–290 form a coiled coil; it reads EAAAVAAQAVAEAEAAMAEAEEAAKEAEAAEAEAEAAQAFAEEASKTLKG.

This sequence belongs to the histone H1/H5 family. SMH subfamily. Forms a homodimer and heterodimers with TRB2 or TRB3. Interacts with POT1b, TRB2 and TRB3 through its H15 domain.

The protein localises to the nucleus. The protein resides in the nucleolus. Its subcellular location is the chromosome. Its function is as follows. Binds preferentially double-stranded telomeric repeats. This chain is Telomere repeat-binding factor 1 (TRB1), found in Arabidopsis thaliana (Mouse-ear cress).